Consider the following 345-residue polypeptide: Anthranilate phosphoribosyltransferase (345 aa).

5-phospho-alpha-D-ribose 1-diphosphate-binding positions include G84, 87–88, T92, 94–97, 112–120, and S124; these read GD, NIST, and KHGNRSVSS. G84 is an anthranilate binding site. Position 96 (S96) interacts with Mg(2+). N115 contributes to the anthranilate binding site. R170 contributes to the anthranilate binding site. 2 residues coordinate Mg(2+): D229 and E230.

This sequence belongs to the anthranilate phosphoribosyltransferase family. In terms of assembly, homodimer. Mg(2+) serves as cofactor.

The enzyme catalyses N-(5-phospho-beta-D-ribosyl)anthranilate + diphosphate = 5-phospho-alpha-D-ribose 1-diphosphate + anthranilate. It participates in amino-acid biosynthesis; L-tryptophan biosynthesis; L-tryptophan from chorismate: step 2/5. Functionally, catalyzes the transfer of the phosphoribosyl group of 5-phosphorylribose-1-pyrophosphate (PRPP) to anthranilate to yield N-(5'-phosphoribosyl)-anthranilate (PRA). The sequence is that of Anthranilate phosphoribosyltransferase from Xanthomonas axonopodis pv. citri (strain 306).